The sequence spans 1024 residues: Protein tiptop (1024 aa).

Residues 20–35 (ELTSPRCQSRDSNTSA) show a composition bias toward polar residues. 2 disordered regions span residues 20–40 (ELTS…AGAG) and 138–215 (EGEV…ISAD). The span at 159–175 (DDQEEDQEQDQEQEQEQ) shows a compositional bias: acidic residues. The C2H2-type 1 zinc-finger motif lies at 317–341 (FKCVWCKQSFSTLANLTAHMKETQH). The disordered stretch occupies residues 350–392 (LPTGGVGTPSAPPPTRLATSASNSACSSSSSSTSSSSNSSKSE). Residues 368–391 (TSASNSACSSSSSSTSSSSNSSKS) are compositionally biased toward low complexity. Residues 426–450 (LKCMWCGQSFRSLAEMTSHMQETQH) form a C2H2-type 2 zinc finger. 5 disordered regions span residues 466-489 (GDER…SSPS), 519-576 (AQKS…SLDS), 712-759 (SRDR…IKAE), 786-818 (FSME…SLLA), and 868-891 (ETTD…ASAT). The span at 477-489 (VPSTSTAAPSSPS) shows a compositional bias: low complexity. The segment at 499-523 (LTCKVCDQAFGSLKELSTHMAQKSH) adopts a C2H2-type 3 zinc-finger fold. The span at 527 to 537 (SPAPSASPPAA) shows a compositional bias: low complexity. Basic residues predominate over residues 543–558 (KRGRQNRNEKRKKSLP). The segment covering 718-729 (SESSSASRVESS) has biased composition (low complexity). Pro residues predominate over residues 745-755 (TPAPPPPPPPT). Basic and acidic residues predominate over residues 786–795 (FSMEACRESP). A compositionally biased stretch (polar residues) spans 796-808 (RSVSKSPAPQTER). A compositionally biased stretch (low complexity) spans 874–891 (STGLRSASSAGSSTASAT). The C2H2-type 4 zinc-finger motif lies at 926–949 (IKCSYCDTPFASKGAYRHHLSKVH). The segment at 954 to 1004 (AGEDSPRLKSPAVQSPRSMPLASPRRSASRSPATGSQQPPPSPTISPYDES) is disordered. Over residues 968-990 (SPRSMPLASPRRSASRSPATGSQ) the composition is skewed to low complexity.

The protein belongs to the teashirt C2H2-type zinc-finger protein family. Expression in the Malpighian tubules (MTs) and stomatogastric nervous system starts at embryonic stage 10. At stage 11, expression in the head domain is initiated in the clypeolabrum in two bilaterally symmetric clusters of cells. At stage 12, expression appears in the central nervous system (CNS) of the trunk and the epidermis. The staining in the hindgut is maintained throughout embryogenesis. At stage 13, expression is present in elongating MTs. The anterior staining is detected in cells that invaginate into the stomodeum and by stage 15 onwards, in cells close to the pharynx. Also expressed in cells of the brain, the second constriction of the gut, the trunk epidermis, the anterior segments of the CNS (the three thoracic and the first two abdominal segments) and in the MTs. From stage 12 onwards, tsh and tio are colocalized in some cells.

Its subcellular location is the nucleus. Functionally, tiptop (tio) and teashirt (tsh) have, on the whole, common activities. Tio and tsh repress each other's expression and tsh has a crucial role for trunk patterning that is in part masked by ectopic expression of tiptop. Both genes share a common activity required for the activation of Ser and svb and the maintenance of en and wg. The protein is Protein tiptop (tio) of Drosophila melanogaster (Fruit fly).